The chain runs to 215 residues: Myelin protein zero-like protein 2 (215 aa).

The first 26 residues, M1–A26, serve as a signal peptide directing secretion. Residues V27 to S141 enclose the Ig-like V-type domain. Residues V27–L154 are Extracellular-facing. N-linked (GlcNAc...) asparagine glycans are attached at residues N39 and N118. C47 and C123 form a disulfide bridge. A helical membrane pass occupies residues A155–F175. The Cytoplasmic portion of the chain corresponds to Q176 to D215.

The protein belongs to the myelin P0 protein family.

It localises to the membrane. In terms of biological role, mediates homophilic cell-cell adhesion. This Bos taurus (Bovine) protein is Myelin protein zero-like protein 2 (MPZL2).